The chain runs to 146 residues: Hemoglobin subunit beta (146 aa).

Position 1 is an N-acetylvaline (valine 1). In terms of domain architecture, Globin spans 2–146 (HLTDGEKNAL…VANALAHKYH (145 aa)). Serine 44 is subject to Phosphoserine. Lysine 59 carries the N6-acetyllysine modification. Histidine 63 lines the heme b pocket. Lysine 82 carries the post-translational modification N6-acetyllysine. Residue histidine 92 participates in heme b binding. Position 93 is an S-nitrosocysteine (cysteine 93). Lysine 144 is subject to N6-acetyllysine.

The protein belongs to the globin family. Heterotetramer of two alpha chains and two beta chains. In terms of tissue distribution, red blood cells.

Functionally, involved in oxygen transport from the lung to the various peripheral tissues. The protein is Hemoglobin subunit beta of Otospermophilus beecheyi (California ground squirrel).